We begin with the raw amino-acid sequence, 196 residues long: ATP-dependent Clp protease proteolytic subunit (196 aa).

Catalysis depends on serine 98, which acts as the Nucleophile. Residue histidine 123 is part of the active site.

Belongs to the peptidase S14 family. In terms of assembly, fourteen ClpP subunits assemble into 2 heptameric rings which stack back to back to give a disk-like structure with a central cavity, resembling the structure of eukaryotic proteasomes.

It is found in the cytoplasm. It catalyses the reaction Hydrolysis of proteins to small peptides in the presence of ATP and magnesium. alpha-casein is the usual test substrate. In the absence of ATP, only oligopeptides shorter than five residues are hydrolyzed (such as succinyl-Leu-Tyr-|-NHMec, and Leu-Tyr-Leu-|-Tyr-Trp, in which cleavage of the -Tyr-|-Leu- and -Tyr-|-Trp bonds also occurs).. In terms of biological role, cleaves peptides in various proteins in a process that requires ATP hydrolysis. Has a chymotrypsin-like activity. Plays a major role in the degradation of misfolded proteins. This Acidobacterium capsulatum (strain ATCC 51196 / DSM 11244 / BCRC 80197 / JCM 7670 / NBRC 15755 / NCIMB 13165 / 161) protein is ATP-dependent Clp protease proteolytic subunit.